A 168-amino-acid polypeptide reads, in one-letter code: Nicotinamide-nucleotide adenylyltransferase (168 aa).

This sequence belongs to the archaeal NMN adenylyltransferase family.

It is found in the cytoplasm. It catalyses the reaction beta-nicotinamide D-ribonucleotide + ATP + H(+) = diphosphate + NAD(+). It functions in the pathway cofactor biosynthesis; NAD(+) biosynthesis; NAD(+) from nicotinamide D-ribonucleotide: step 1/1. This Methanosphaerula palustris (strain ATCC BAA-1556 / DSM 19958 / E1-9c) protein is Nicotinamide-nucleotide adenylyltransferase.